A 473-amino-acid polypeptide reads, in one-letter code: Glutamate--tRNA ligase 2 (473 aa).

The 'HIGH' region motif lies at 11 to 21 (PSPTGYLHIGG). Basic and acidic residues predominate over residues 113–133 (KARAEGRPPRYDGRWRDRDPS). The disordered stretch occupies residues 113–136 (KARAEGRPPRYDGRWRDRDPSEAP). A 'KMSKS' region motif is present at residues 240–244 (KLSKR). Position 243 (K243) interacts with ATP.

This sequence belongs to the class-I aminoacyl-tRNA synthetase family. Glutamate--tRNA ligase type 1 subfamily. As to quaternary structure, monomer.

The protein localises to the cytoplasm. It catalyses the reaction tRNA(Glu) + L-glutamate + ATP = L-glutamyl-tRNA(Glu) + AMP + diphosphate. Its function is as follows. Catalyzes the attachment of glutamate to tRNA(Glu) in a two-step reaction: glutamate is first activated by ATP to form Glu-AMP and then transferred to the acceptor end of tRNA(Glu). The chain is Glutamate--tRNA ligase 2 from Brucella canis (strain ATCC 23365 / NCTC 10854 / RM-666).